The sequence spans 145 residues: Nucleoside diphosphate kinase (145 aa).

ATP contacts are provided by K11, F59, R87, T93, R104, and N114. H117 functions as the Pros-phosphohistidine intermediate in the catalytic mechanism.

It belongs to the NDK family. As to quaternary structure, homotetramer. Mg(2+) serves as cofactor.

Its subcellular location is the cytoplasm. It catalyses the reaction a 2'-deoxyribonucleoside 5'-diphosphate + ATP = a 2'-deoxyribonucleoside 5'-triphosphate + ADP. The catalysed reaction is a ribonucleoside 5'-diphosphate + ATP = a ribonucleoside 5'-triphosphate + ADP. Its function is as follows. Major role in the synthesis of nucleoside triphosphates other than ATP. The ATP gamma phosphate is transferred to the NDP beta phosphate via a ping-pong mechanism, using a phosphorylated active-site intermediate. The chain is Nucleoside diphosphate kinase from Myxococcus xanthus.